The chain runs to 173 residues: Insertion element IS150 protein InsJ (173 aa).

It belongs to the IS150/IS1296 orfA family.

The sequence is that of Insertion element IS150 protein InsJ (insJ) from Escherichia coli (strain K12).